Here is a 326-residue protein sequence, read N- to C-terminus: ELMO domain-containing protein 1 (326 aa).

In terms of domain architecture, ELMO spans 133–306 (QHEEMLLKLW…KFRKRIIKQL (174 aa)).

Its function is as follows. Acts as a GTPase-activating protein (GAP) toward guanine nucleotide exchange factors like ARL2, ARL3, ARF1 and ARF6, but not for GTPases outside the Arf family. The protein is ELMO domain-containing protein 1 (Elmod1) of Mus musculus (Mouse).